Reading from the N-terminus, the 42-residue chain is Photosystem I reaction center subunit IX (42 aa).

A helical membrane pass occupies residues 7 to 27 (YLSTAPVIATIWFGFLAGLLI).

The protein belongs to the PsaJ family.

It localises to the plastid. Its subcellular location is the chloroplast thylakoid membrane. In terms of biological role, may help in the organization of the PsaE and PsaF subunits. The chain is Photosystem I reaction center subunit IX from Chaetosphaeridium globosum (Charophycean green alga).